Reading from the N-terminus, the 200-residue chain is Adenylyl-sulfate kinase (200 aa).

Residue 36–43 (GLSGSGKS) participates in ATP binding. The active-site Phosphoserine intermediate is the serine 110.

The protein belongs to the APS kinase family.

It catalyses the reaction adenosine 5'-phosphosulfate + ATP = 3'-phosphoadenylyl sulfate + ADP + H(+). The protein operates within sulfur metabolism; hydrogen sulfide biosynthesis; sulfite from sulfate: step 2/3. Functionally, catalyzes the synthesis of activated sulfate. The protein is Adenylyl-sulfate kinase of Clostridium acetobutylicum (strain ATCC 824 / DSM 792 / JCM 1419 / IAM 19013 / LMG 5710 / NBRC 13948 / NRRL B-527 / VKM B-1787 / 2291 / W).